A 325-amino-acid polypeptide reads, in one-letter code: MISPSSRKGMLKERAMDLVTQTTILPLLFGCLGIFSLFRLLQRTRSKAYLRNAVVVVTGATSGLGKECARVFHAAGAKVVLCGRNVKALEEFTRELADSSSSQGQTHQPCVVTFDLADPGAIAPAAAEILQCFGYVDILINNAGISYRGAISDTIVDVDRKVMEINYFGPVALTKALLPSMVERKRGHIVAISSIQGKISIPFRSAYAASKHATQAFFDCLRAEMKDSDIEVTVISPGYIHTNLSVNAVTADGSRYGALDKNTAQGRSAVEVAQDIFDAVGKKKKDVLLTDFLPTMAVYIRTLAPRLFFRIMASRARKERKSKNS.

Residues Met-1–Asp-17 lie on the Cytoplasmic side of the membrane. A helical; Signal-anchor for type II membrane protein transmembrane segment spans residues Leu-18–Phe-38. Over Arg-39–Ser-325 the chain is Lumenal. 2 residues coordinate NAD(+): Ser-62 and Leu-64. Ser-194 contributes to the substrate binding site. The NAD(+) site is built by Tyr-207, Lys-211, and Thr-242. The active-site Proton acceptor is Tyr-207.

Belongs to the short-chain dehydrogenases/reductases (SDR) family.

It is found in the endoplasmic reticulum membrane. Its function is as follows. Putative oxidoreductase. The polypeptide is Dehydrogenase/reductase SDR family member 7B (Dhrs7b) (Rattus norvegicus (Rat)).